A 793-amino-acid polypeptide reads, in one-letter code: E3 UFM1-protein ligase 1 (793 aa).

Residues 2–212 form a required for E3 UFM1-protein ligase activity region; sequence AADWEEIRRL…INNLLNLYGF (211 aa). Disordered regions lie at residues 405 to 472 and 745 to 793; these read ALLE…RNKL and GAEK…SVTE. Residues 427–439 are compositionally biased toward gly residues; the sequence is EGGGSVKSGGGGN. Basic and acidic residues predominate over residues 767–781; that stretch reads SLQRELHSLSRDIKD.

Belongs to the UFL1 family. Catalytic component of the UFM1 ribosome E3 ligase (UREL) complex. Interacts with E2-like enzyme UFC1.

It is found in the endoplasmic reticulum membrane. Its subcellular location is the cytoplasm. It localises to the cytosol. The protein resides in the nucleus. The protein localises to the chromosome. E3 protein ligase that mediates ufmylation, the covalent attachment of the ubiquitin-like modifier UFM1 to lysine residues on target proteins, and which plays a key role in various processes, such as ribosome recycling, response to DNA damage, interferon response or reticulophagy (also called ER-phagy). As part of the UREL complex, plays a key role in ribosome recycling by catalyzing mono-ufmylation of RPL26/uL24 subunit of the 60S ribosome. Ufmylation of RPL26/uL24 occurs on free 60S ribosomes following ribosome dissociation: it weakens the junction between post-termination 60S subunits and SEC61 translocons, promoting release and recycling of the large ribosomal subunit from the endoplasmic reticulum membrane. Ufmylation of RPL26/uL24 and subsequent 60S ribosome recycling either take place after normal termination of translation or after ribosome stalling during cotranslational translocation at the endoplasmic reticulum. Involved in reticulophagy in response to endoplasmic reticulum stress by mediating ufmylation of proteins such as CYB5R3 and RPN1, thereby promoting lysosomal degradation of ufmylated proteins. Ufmylation in response to endoplasmic reticulum stress is essential for processes such as hematopoiesis, blood vessel morphogenesis or inflammatory response. This Danio rerio (Zebrafish) protein is E3 UFM1-protein ligase 1.